The following is a 534-amino-acid chain: Polyprotein pp62 (534 aa).

It belongs to the asfivirus polyprotein pp62 family. Monomer. Predominantly exists as a monomer, with very little dimers. Homodimerization seems to be linked to low pH. In terms of assembly, homodimer; disulfide-linked. Homotrimer; disulfide-linked. Homohexamer. Post-translationally, monoubiquitinated in vitro by viral UBCv1. Specific enzymatic cleavages in vivo by the viral pS273R protease yield mature proteins.

The protein localises to the host cytoplasm. Its subcellular location is the host perinuclear region. It is found in the virion. Functionally, essential for the correct assembly and maturation of the core of the virion. In terms of biological role, component of the core shell. Binds to phosphatidylserine, which may enable the core shell binding with the inner membrane. Component of the core shell. Binds to phosphatidylserine and DNA, which may link the core shell to the inner membrane and to the viral nucleoid. Its function is as follows. Component of the core shell. The polypeptide is Polyprotein pp62 (Ornithodoros (relapsing fever ticks)).